Consider the following 158-residue polypeptide: Developmental pluripotency-associated protein 3 (158 aa).

Disordered regions lie at residues 1-38 (MDEPSEKVDPVVNPETQMYDGSQREDEGDSPDDSEILQ) and 54-78 (SAKPTKYHRRQRVRLQVKSQPVENR). Residues 26–35 (DEGDSPDDSE) are compositionally biased toward acidic residues. Over residues 58–68 (TKYHRRQRVRL) the composition is skewed to basic residues.

The protein resides in the nucleus. Its subcellular location is the cytoplasm. Primordial germ cell (PGCs)-specific protein involved in epigenetic chromatin reprogramming in the zygote following fertilization. In zygotes, DNA demethylation occurs selectively in the paternal pronucleus before the first cell division, while the adjacent maternal pronucleus and certain paternally-imprinted loci are protected from this process. Participates in protection of DNA methylation in the maternal pronucleus by preventing conversion of 5mC to 5hmC: specifically recognizes and binds histone H3 dimethylated at 'Lys-9' (H3K9me2) on maternal genome, and protects maternal genome from TET3-mediated conversion to 5hmC and subsequent DNA demethylation. Does not bind paternal chromatin, which is mainly packed into protamine and does not contain much H3K9me2 mark. Also protects imprinted loci that are marked with H3K9me2 in mature sperm from DNA demethylation in early embryogenesis. May be important for the totipotent/pluripotent states continuing through preimplantation development. Also involved in chromatin condensation in oocytogenesis. The sequence is that of Developmental pluripotency-associated protein 3 (Dppa3) from Rattus norvegicus (Rat).